Here is a 320-residue protein sequence, read N- to C-terminus: ATP-dependent 6-phosphofructokinase (320 aa).

An ATP-binding site is contributed by glycine 12. Residues 22–26 (RGVVR) and 55–60 (RYSVSD) each bind ADP. Residues 73–74 (RF) and 103–106 (GDGS) each bind ATP. Residue aspartate 104 coordinates Mg(2+). Substrate is bound at residue 126 to 128 (TID). Residue aspartate 128 is the Proton acceptor of the active site. Residue arginine 155 participates in ADP binding. Substrate contacts are provided by residues arginine 163 and 170 to 172 (MGR). ADP is bound by residues 186–188 (GCE), lysine 212, and 214–216 (KKH). Substrate contacts are provided by residues glutamate 223, arginine 244, and 250–253 (HIQR).

It belongs to the phosphofructokinase type A (PFKA) family. ATP-dependent PFK group I subfamily. Prokaryotic clade 'B1' sub-subfamily. Homotetramer. Mg(2+) is required as a cofactor.

Its subcellular location is the cytoplasm. It catalyses the reaction beta-D-fructose 6-phosphate + ATP = beta-D-fructose 1,6-bisphosphate + ADP + H(+). It functions in the pathway carbohydrate degradation; glycolysis; D-glyceraldehyde 3-phosphate and glycerone phosphate from D-glucose: step 3/4. With respect to regulation, allosterically activated by ADP and other diphosphonucleosides, and allosterically inhibited by phosphoenolpyruvate. In terms of biological role, catalyzes the phosphorylation of D-fructose 6-phosphate to fructose 1,6-bisphosphate by ATP, the first committing step of glycolysis. This chain is ATP-dependent 6-phosphofructokinase, found in Buchnera aphidicola subsp. Acyrthosiphon pisum (strain 5A).